The sequence spans 202 residues: Outer-membrane lipoprotein carrier protein (202 aa).

Residues 1 to 18 (MNKLFLILLLIFSHEVFS) form the signal peptide.

This sequence belongs to the LolA family. In terms of assembly, monomer.

It is found in the periplasm. Participates in the translocation of lipoproteins from the inner membrane to the outer membrane. Only forms a complex with a lipoprotein if the residue after the N-terminal Cys is not an aspartate (The Asp acts as a targeting signal to indicate that the lipoprotein should stay in the inner membrane). This chain is Outer-membrane lipoprotein carrier protein, found in Legionella pneumophila (strain Corby).